Here is a 1609-residue protein sequence, read N- to C-terminus: Transmembrane protein 131-like (1609 aa).

The signal sequence occupies residues 1-40 (MAGLRRPQPGCYCRTAAAVNLLLGVFQVLLPCCRPGGAQG). At 41–869 (QAIEPLPNVV…VVPGPSWEES (829 aa)) the chain is on the extracellular side. Asn343, Asn439, Asn522, Asn593, Asn709, and Asn846 each carry an N-linked (GlcNAc...) asparagine glycan. Residues 696–916 (DYGKVTSLIL…QNASSSSQQN (221 aa)) form a required for Wnt-signaling inhibition and LRP6 degradation region. A helical membrane pass occupies residues 870–890 (FWRLTVFFVSLSLLGVILIAF). At 891-1609 (QQAQYILMEF…SRDSSYCGNV (719 aa)) the chain is on the cytoplasmic side. Disordered stretches follow at residues 946–974 (RGKN…YGHS), 991–1014 (TAAA…SSLP), 1108–1144 (KTSK…NQQV), 1159–1178 (VDTK…EDMF), and 1304–1340 (SSSD…PMVD). Residues 952 to 961 (PVNTPQSRIQ) show a composition bias toward polar residues. A compositionally biased stretch (low complexity) spans 991–1000 (TAAASSTSTT). Ser1122 is subject to Phosphoserine. The span at 1304–1331 (SSSDCGSSSGSVRASRGSWGSWSSTSSS) shows a compositional bias: low complexity.

Belongs to the TMEM131 family. In terms of tissue distribution, expressed in thymocytes.

It localises to the cell membrane. It is found in the cytoplasm. The protein resides in the endoplasmic reticulum. Its function is as follows. Membrane-associated form that antagonizes canonical Wnt signaling by triggering lysosome-dependent degradation of Wnt-activated LRP6. Regulates thymocyte proliferation. In Homo sapiens (Human), this protein is Transmembrane protein 131-like.